A 555-amino-acid polypeptide reads, in one-letter code: CTP synthase (555 aa).

Positions 1 to 267 (MAKYIFVTGG…GNYLTLRLGL (267 aa)) are amidoligase domain. Residue Ser13 coordinates CTP. Ser13 contributes to the UTP binding site. 14–19 (SVGKGI) contributes to the ATP binding site. Position 54 (Tyr54) interacts with L-glutamine. Asp71 contacts ATP. Residues Asp71 and Glu141 each coordinate Mg(2+). CTP is bound by residues 148–150 (DIE), 188–193 (KTKPTQ), and Lys224. UTP contacts are provided by residues 188-193 (KTKPTQ) and Lys224. The Glutamine amidotransferase type-1 domain occupies 292 to 535 (AIALVGKYVE…IAAAAQTFRE (244 aa)). Position 354 (Gly354) interacts with L-glutamine. Cys381 (nucleophile; for glutamine hydrolysis) is an active-site residue. Residues 382–385 (LGMQ), Glu406, and Arg463 contribute to the L-glutamine site. Residues His508 and Glu510 contribute to the active site.

This sequence belongs to the CTP synthase family. As to quaternary structure, homotetramer.

The enzyme catalyses UTP + L-glutamine + ATP + H2O = CTP + L-glutamate + ADP + phosphate + 2 H(+). It catalyses the reaction L-glutamine + H2O = L-glutamate + NH4(+). The catalysed reaction is UTP + NH4(+) + ATP = CTP + ADP + phosphate + 2 H(+). It functions in the pathway pyrimidine metabolism; CTP biosynthesis via de novo pathway; CTP from UDP: step 2/2. With respect to regulation, allosterically activated by GTP, when glutamine is the substrate; GTP has no effect on the reaction when ammonia is the substrate. The allosteric effector GTP functions by stabilizing the protein conformation that binds the tetrahedral intermediate(s) formed during glutamine hydrolysis. Inhibited by the product CTP, via allosteric rather than competitive inhibition. In terms of biological role, catalyzes the ATP-dependent amination of UTP to CTP with either L-glutamine or ammonia as the source of nitrogen. Regulates intracellular CTP levels through interactions with the four ribonucleotide triphosphates. This chain is CTP synthase, found in Roseiflexus castenholzii (strain DSM 13941 / HLO8).